The sequence spans 125 residues: Small ribosomal subunit protein bS6 (125 aa).

Residues 100 to 125 (SPMVKAREERKPLTEVENNDFEDAEE) are disordered. A compositionally biased stretch (basic and acidic residues) spans 104 to 113 (KAREERKPLT). Over residues 116 to 125 (ENNDFEDAEE) the composition is skewed to acidic residues.

The protein belongs to the bacterial ribosomal protein bS6 family.

Binds together with bS18 to 16S ribosomal RNA. The protein is Small ribosomal subunit protein bS6 of Histophilus somni (strain 129Pt) (Haemophilus somnus).